A 192-amino-acid chain; its full sequence is Transmembrane protein 276 (192 aa).

The N-terminal stretch at 1–32 (MVSKPRTEWSTVLSHLVLAGVSLHAAVSSVQS) is a signal peptide. The next 4 helical transmembrane spans lie at 35–55 (GAAA…APGP), 63–83 (AGAW…FHWV), 92–112 (LLLG…PEGC), and 114–134 (VAGQ…AVFT).

The protein localises to the membrane. This Mus musculus (Mouse) protein is Transmembrane protein 276.